We begin with the raw amino-acid sequence, 259 residues long: Global transcriptional regulator CodY (259 aa).

The tract at residues 1-155 is GAF domain; that stretch reads MDLLTRTRKI…GATVVGMEIL (155 aa). A DNA-binding region (H-T-H motif) is located at residues 203–222; the sequence is ASKIADRVGITRSVIVNALR. S215 carries the phosphoserine modification.

The protein belongs to the CodY family.

It localises to the cytoplasm. In terms of biological role, DNA-binding global transcriptional regulator which is involved in the adaptive response to starvation and acts by directly or indirectly controlling the expression of numerous genes in response to nutrient availability. During rapid exponential growth, CodY is highly active and represses genes whose products allow adaptation to nutrient depletion. The chain is Global transcriptional regulator CodY from Shouchella clausii (strain KSM-K16) (Alkalihalobacillus clausii).